An 816-amino-acid polypeptide reads, in one-letter code: Leucine--tRNA ligase (816 aa).

Positions 40–51 (SYPSGSQLHAGH) match the 'HIGH' region motif. A 'KMSKS' region motif is present at residues 576–580 (KMSKS). Lysine 579 provides a ligand contact to ATP.

The protein belongs to the class-I aminoacyl-tRNA synthetase family.

The protein localises to the cytoplasm. The catalysed reaction is tRNA(Leu) + L-leucine + ATP = L-leucyl-tRNA(Leu) + AMP + diphosphate. This is Leucine--tRNA ligase from Clostridium perfringens (strain 13 / Type A).